Reading from the N-terminus, the 124-residue chain is Small ribosomal subunit protein uS12 (124 aa).

Residue Asp-90 is modified to 3-methylthioaspartic acid.

This sequence belongs to the universal ribosomal protein uS12 family. In terms of assembly, part of the 30S ribosomal subunit. Contacts proteins S8 and S17. May interact with IF1 in the 30S initiation complex.

Its function is as follows. With S4 and S5 plays an important role in translational accuracy. Interacts with and stabilizes bases of the 16S rRNA that are involved in tRNA selection in the A site and with the mRNA backbone. Located at the interface of the 30S and 50S subunits, it traverses the body of the 30S subunit contacting proteins on the other side and probably holding the rRNA structure together. The combined cluster of proteins S8, S12 and S17 appears to hold together the shoulder and platform of the 30S subunit. The chain is Small ribosomal subunit protein uS12 from Wolbachia sp. subsp. Brugia malayi (strain TRS).